The following is a 152-amino-acid chain: Cytochrome c-type biogenesis CcmH-like mitochondrial protein (152 aa).

Topologically, residues 1 to 83 (MATEEDVKQR…ILYTPKFDLQ (83 aa)) are mitochondrial intermembrane. Residues C26 and C29 each contribute to the heme site. A helical transmembrane segment spans residues 84 to 104 (TAAIWLSPVIVGGVAAGVWAY). Topologically, residues 105 to 152 (KKHRQRTNVHIMALNLVRGVPLTPREKETMLDVLTPPPPANKWWWPGK) are mitochondrial matrix.

It belongs to the CcmH/CycL/Ccl2/NrfF family.

It is found in the mitochondrion inner membrane. In terms of biological role, plays a role in mitochondrial cytochrome c maturation. Probable component of a heme lyase complex involved in the reduction of apocytochrome c. In Oryza sativa subsp. indica (Rice), this protein is Cytochrome c-type biogenesis CcmH-like mitochondrial protein.